A 246-amino-acid polypeptide reads, in one-letter code: Ribosomal RNA small subunit methyltransferase J (246 aa).

S-adenosyl-L-methionine is bound by residues 115 to 116 (ER) and Asp-169.

This sequence belongs to the methyltransferase superfamily. RsmJ family.

The protein localises to the cytoplasm. It catalyses the reaction guanosine(1516) in 16S rRNA + S-adenosyl-L-methionine = N(2)-methylguanosine(1516) in 16S rRNA + S-adenosyl-L-homocysteine + H(+). Its function is as follows. Specifically methylates the guanosine in position 1516 of 16S rRNA. The protein is Ribosomal RNA small subunit methyltransferase J of Buchnera aphidicola subsp. Acyrthosiphon pisum (strain Tuc7).